Here is a 152-residue protein sequence, read N- to C-terminus: Clitocypin-4/-3 (152 aa).

The protein belongs to the protease inhibitor I48 family. As to quaternary structure, homodimer.

Binds and inhibits cysteine proteinases. Inhibits most strongly papain and cathepsin L, more weakly bromelain and cathepsin B while it is completely ineffective against cathepsin H. The polypeptide is Clitocypin-4/-3 (clt4) (Clitocybe nebularis (Clouded agaric)).